Consider the following 330-residue polypeptide: Methionine import ATP-binding protein MetN (330 aa).

Residues 2–241 form the ABC transporter domain; the sequence is IAFRGVSKVY…PSTRLHQLCF (240 aa). 38–45 serves as a coordination point for ATP; it reads GQSGAGKS.

Belongs to the ABC transporter superfamily. Methionine importer (TC 3.A.1.24) family. In terms of assembly, the complex is composed of two ATP-binding proteins (MetN), two transmembrane proteins (MetI) and a solute-binding protein (MetQ).

It localises to the cell inner membrane. It catalyses the reaction L-methionine(out) + ATP + H2O = L-methionine(in) + ADP + phosphate + H(+). The catalysed reaction is D-methionine(out) + ATP + H2O = D-methionine(in) + ADP + phosphate + H(+). Its function is as follows. Part of the ABC transporter complex MetNIQ involved in methionine import. Responsible for energy coupling to the transport system. This Myxococcus xanthus (strain DK1622) protein is Methionine import ATP-binding protein MetN.